The primary structure comprises 398 residues: Arylacetamide deacetylase (398 aa).

The Cytoplasmic segment spans residues 1-5 (MGKTI). Residues 6-26 (SLLISVVLVAYYLYIPLPDAI) traverse the membrane as a helical; Signal-anchor for type II membrane protein segment. Over 27-398 (EEPWKVVWET…QYLSWLIKNL (372 aa)) the chain is Lumenal. The Involved in the stabilization of the negatively charged intermediate by the formation of the oxyanion hole signature appears at 110–112 (HGG). C115 and C339 form a disulfide bridge. S188 is an active-site residue. The N-linked (GlcNAc...) asparagine glycan is linked to N281. Active-site residues include D342 and H372.

Belongs to the 'GDXG' lipolytic enzyme family. N-glycosylated. Highest levels in liver with lower levels in jejunum and kidney.

The protein localises to the endoplasmic reticulum membrane. Its subcellular location is the microsome membrane. The enzyme catalyses a triacylglycerol + H2O = a diacylglycerol + a fatty acid + H(+). Functionally, displays cellular triglyceride lipase activity in liver, increases the levels of intracellular fatty acids derived from the hydrolysis of newly formed triglyceride stores and plays a role in very low-density lipoprotein assembly. Displays serine esterase activity in liver. Deacetylates a variety of arylacetamide substrates, including xenobiotic compounds and procarcinogens, converting them to the primary arylamide compounds and increasing their toxicity. The protein is Arylacetamide deacetylase (Aadac) of Mus musculus (Mouse).